Here is a 399-residue protein sequence, read N- to C-terminus: Calsequestrin-2 (399 aa).

Residues 1-19 (MKRTHLFIVGIYFLSSCRA) form the signal peptide. Y282 bears the Phosphotyrosine mark. N335 carries N-linked (GlcNAc...) asparagine glycosylation. The interval 365-399 (VLSGKINTEDDDEDDDDDDNSDEEDNDDSDDDDDE) is disordered. Residues 373–399 (EDDDEDDDDDDNSDEEDNDDSDDDDDE) show a composition bias toward acidic residues. 2 positions are modified to phosphoserine: S385 and S393.

It belongs to the calsequestrin family. In terms of assembly, monomer, homodimer and homooligomer. Mostly monomeric in the absence of calcium. Forms higher oligomers in a calcium-dependent manner. Dimers associate to form tetramers, that then form linear homomer chains. Interacts with ASPH and TRDN. Phosphorylation in the C-terminus, probably by CK2, moderately increases calcium buffering capacity. In terms of processing, N-glycosylated.

It localises to the sarcoplasmic reticulum lumen. In terms of biological role, calsequestrin is a high-capacity, moderate affinity, calcium-binding protein and thus acts as an internal calcium store in muscle. Calcium ions are bound by clusters of acidic residues at the protein surface, especially at the interface between subunits. Can bind around 60 Ca(2+) ions. Regulates the release of lumenal Ca(2+) via the calcium release channel RYR2; this plays an important role in triggering muscle contraction. Plays a role in excitation-contraction coupling in the heart and in regulating the rate of heart beats. This Homo sapiens (Human) protein is Calsequestrin-2 (CASQ2).